Here is a 448-residue protein sequence, read N- to C-terminus: Enolase (448 aa).

Q164 contacts (2R)-2-phosphoglycerate. E206 acts as the Proton donor in catalysis. Positions 243, 289, and 316 each coordinate Mg(2+). (2R)-2-phosphoglycerate contacts are provided by K341, R370, S371, and K392. K341 (proton acceptor) is an active-site residue.

Belongs to the enolase family. Mg(2+) is required as a cofactor.

The protein resides in the cytoplasm. It localises to the secreted. It is found in the cell surface. The catalysed reaction is (2R)-2-phosphoglycerate = phosphoenolpyruvate + H2O. The protein operates within carbohydrate degradation; glycolysis; pyruvate from D-glyceraldehyde 3-phosphate: step 4/5. Catalyzes the reversible conversion of 2-phosphoglycerate (2-PG) into phosphoenolpyruvate (PEP). It is essential for the degradation of carbohydrates via glycolysis. The chain is Enolase from Oenococcus oeni (strain ATCC BAA-331 / PSU-1).